The chain runs to 544 residues: Probable protein kinase UbiB (544 aa).

In terms of domain architecture, Protein kinase spans 123–501 (EFDIKPLASA…KRQQATGKFL (379 aa)). ATP contacts are provided by residues 129–137 (LASASIAQV) and Lys-152. Catalysis depends on Asp-287, which acts as the Proton acceptor. 2 helical membrane passes run 496–516 (ATGK…AILV) and 519–539 (AYEQ…LLSW).

Belongs to the ABC1 family. UbiB subfamily.

The protein resides in the cell inner membrane. Its pathway is cofactor biosynthesis; ubiquinone biosynthesis [regulation]. Its function is as follows. Is probably a protein kinase regulator of UbiI activity which is involved in aerobic coenzyme Q (ubiquinone) biosynthesis. In Vibrio campbellii (strain ATCC BAA-1116), this protein is Probable protein kinase UbiB.